The chain runs to 632 residues: tRNA uridine 5-carboxymethylaminomethyl modification enzyme MnmG (632 aa).

Residue 13–18 participates in FAD binding; the sequence is GGGHAG. Position 274 to 288 (274 to 288) interacts with NAD(+); the sequence is GPRYCPSIEDKVMRF.

Belongs to the MnmG family. As to quaternary structure, homodimer. Heterotetramer of two MnmE and two MnmG subunits. It depends on FAD as a cofactor.

It localises to the cytoplasm. Its function is as follows. NAD-binding protein involved in the addition of a carboxymethylaminomethyl (cmnm) group at the wobble position (U34) of certain tRNAs, forming tRNA-cmnm(5)s(2)U34. This chain is tRNA uridine 5-carboxymethylaminomethyl modification enzyme MnmG, found in Dichelobacter nodosus (strain VCS1703A).